The following is a 316-amino-acid chain: Na(+)/H(+) exchange regulatory cofactor NHE-RF2 (316 aa).

A PDZ 1 domain is found at 11–91 (LCRLVRGEQG…ETRLLVVDKE (81 aa)). The tract at residues 109–148 (QRGLPPAHDPWEPKPDWARAGSLSSDAGQKDVNGPPRELR) is disordered. A phosphoserine mark is found at Ser-130, Ser-183, and Ser-254. One can recognise a PDZ 2 domain in the interval 151 to 231 (LCHLRKGPQG…EARLLLVDPE (81 aa)). The disordered stretch occupies residues 244–303 (TEEHVEGPLPSPITNGTSPAQDASAWKRDPFQESGLHLSPTAAEAKEKARATRVNKRAPQ). Positions 255–264 (PITNGTSPAQ) are enriched in polar residues. Residue Ser-282 is modified to Phosphoserine.

Homodimer, and heterodimer with NHERF1. Binds ADRB2, SLC9A3, P2RY1, P2YR2, SRY, RDX, PDZK1 and LPAR2. Found in a complex with EZR, PODXL and NHERF2. Interacts (via the PDZ domains) with PODXL (via the C-terminal PDZ-binding motif DTHL); interaction is detected in glomerular epithelium cells. Binds PODXL. Interacts with SGK1 and KCNJ1/ROMK1. Interacts (via the PDZ domains) with SLC26A6. As to expression, detected in kidney glomeruli.

It localises to the endomembrane system. The protein localises to the nucleus. Its subcellular location is the apical cell membrane. Functionally, scaffold protein that connects plasma membrane proteins with members of the ezrin/moesin/radixin family and thereby helps to link them to the actin cytoskeleton and to regulate their surface expression. Necessary for cAMP-mediated phosphorylation and inhibition of SLC9A3. May also act as scaffold protein in the nucleus. This Oryctolagus cuniculus (Rabbit) protein is Na(+)/H(+) exchange regulatory cofactor NHE-RF2 (NHERF2).